A 219-amino-acid chain; its full sequence is Trafficking protein particle complex subunit 4 (219 aa).

The protein belongs to the TRAPP small subunits family. TRAPPC4 subfamily. As to quaternary structure, component of the multisubunit TRAPP (transport protein particle) complex, which includes at least TRAPPC2, TRAPPC2L, TRAPPC3, TRAPPC3L, TRAPPC4, TRAPPC5, TRAPPC8, TRAPPC9, TRAPPC10, TRAPPC11 and TRAPPC12. Interacts with SDC2.

Its subcellular location is the postsynaptic cell membrane. The protein resides in the golgi apparatus membrane. The protein localises to the endoplasmic reticulum. It is found in the vesicle. In terms of biological role, core component of the TRAPP complexes which has a function of guanine nucleotide exchange factor activity for Rab1 GTPase. Plays a role in vesicular transport from endoplasmic reticulum to Golgi and autophagy. May play a role in dendrite postsynaptic membrane trafficking. The polypeptide is Trafficking protein particle complex subunit 4 (Homo sapiens (Human)).